The chain runs to 206 residues: 2,3-bisphosphoglycerate-dependent phosphoglycerate mutase (206 aa).

Substrate is bound by residues 9–16 (RHGQSEWN), 22–23 (TG), R61, 88–91 (ERDY), K99, 115–116 (RR), and 159–160 (GN). Catalysis depends on H10, which acts as the Tele-phosphohistidine intermediate. The active-site Proton donor/acceptor is E88.

It belongs to the phosphoglycerate mutase family. BPG-dependent PGAM subfamily. Homodimer.

It catalyses the reaction (2R)-2-phosphoglycerate = (2R)-3-phosphoglycerate. It participates in carbohydrate degradation; glycolysis; pyruvate from D-glyceraldehyde 3-phosphate: step 3/5. In terms of biological role, catalyzes the interconversion of 2-phosphoglycerate and 3-phosphoglycerate. The chain is 2,3-bisphosphoglycerate-dependent phosphoglycerate mutase from Mesorhizobium japonicum (strain LMG 29417 / CECT 9101 / MAFF 303099) (Mesorhizobium loti (strain MAFF 303099)).